A 959-amino-acid polypeptide reads, in one-letter code: UPF0182 protein MAE_41360 (959 aa).

9 helical membrane passes run 13-33 (PILL…VVAN), 50-70 (LSWQ…FIFT), 99-119 (LLGL…MLLY), 156-176 (DISS…GLLI), 184-204 (IISI…WANF), 239-259 (LWLT…YLFS), 276-296 (LRHL…HHII), 319-339 (VGQF…IWLG), and 362-382 (FFPY…GTII).

Belongs to the UPF0182 family.

Its subcellular location is the cell membrane. The sequence is that of UPF0182 protein MAE_41360 from Microcystis aeruginosa (strain NIES-843 / IAM M-2473).